Reading from the N-terminus, the 334-residue chain is Phosphate acyltransferase (334 aa).

It belongs to the PlsX family. Homodimer. Probably interacts with PlsY.

The protein localises to the cytoplasm. It carries out the reaction a fatty acyl-[ACP] + phosphate = an acyl phosphate + holo-[ACP]. It participates in lipid metabolism; phospholipid metabolism. Functionally, catalyzes the reversible formation of acyl-phosphate (acyl-PO(4)) from acyl-[acyl-carrier-protein] (acyl-ACP). This enzyme utilizes acyl-ACP as fatty acyl donor, but not acyl-CoA. In Clostridium kluyveri (strain NBRC 12016), this protein is Phosphate acyltransferase.